Consider the following 107-residue polypeptide: Large ribosomal subunit protein mL55 (107 aa).

A mitochondrion-targeting transit peptide spans 1–16 (MLLKQLPQAVQQIRCI).

It belongs to the mitochondrion-specific ribosomal protein mL55 family. As to quaternary structure, component of the mitochondrial ribosome large subunit (39S) which comprises a 16S rRNA and about 50 distinct proteins. Ubiquitously expressed (at protein level).

The protein resides in the mitochondrion. In terms of biological role, involved in mitochondrial biogenesis and G2/M phase cell cycle progression. The protein is Large ribosomal subunit protein mL55 (mRpL55) of Drosophila melanogaster (Fruit fly).